We begin with the raw amino-acid sequence, 341 residues long: tRNA N6-adenosine threonylcarbamoyltransferase (341 aa).

Residues His-111 and His-115 each coordinate Fe cation. Substrate contacts are provided by residues 134–138, Asp-167, Gly-180, and Asn-276; that span reads LVSGG. Fe cation is bound at residue Asp-304.

It belongs to the KAE1 / TsaD family. Fe(2+) is required as a cofactor.

It localises to the cytoplasm. It carries out the reaction L-threonylcarbamoyladenylate + adenosine(37) in tRNA = N(6)-L-threonylcarbamoyladenosine(37) in tRNA + AMP + H(+). Required for the formation of a threonylcarbamoyl group on adenosine at position 37 (t(6)A37) in tRNAs that read codons beginning with adenine. Is involved in the transfer of the threonylcarbamoyl moiety of threonylcarbamoyl-AMP (TC-AMP) to the N6 group of A37, together with TsaE and TsaB. TsaD likely plays a direct catalytic role in this reaction. The sequence is that of tRNA N6-adenosine threonylcarbamoyltransferase from Pseudomonas entomophila (strain L48).